Consider the following 406-residue polypeptide: Argininosuccinate synthase (406 aa).

Residues 11–19 (AYSGGLDTS) and Ala-38 each bind ATP. Tyr-91 and Ser-96 together coordinate L-citrulline. Position 121 (Gly-121) interacts with ATP. Residues Thr-123, Asn-127, and Asp-128 each contribute to the L-aspartate site. Asn-127 serves as a coordination point for L-citrulline. 5 residues coordinate L-citrulline: Arg-131, Ser-182, Ser-191, Glu-267, and Tyr-279.

Belongs to the argininosuccinate synthase family. Type 1 subfamily. In terms of assembly, homotetramer.

The protein localises to the cytoplasm. The catalysed reaction is L-citrulline + L-aspartate + ATP = 2-(N(omega)-L-arginino)succinate + AMP + diphosphate + H(+). It participates in amino-acid biosynthesis; L-arginine biosynthesis; L-arginine from L-ornithine and carbamoyl phosphate: step 2/3. This is Argininosuccinate synthase from Rhodospirillum centenum (strain ATCC 51521 / SW).